The following is a 213-amino-acid chain: Phosphatidylserine decarboxylase proenzyme (213 aa).

Serine 182 serves as the catalytic Schiff-base intermediate with substrate; via pyruvic acid. The residue at position 182 (serine 182) is a Pyruvic acid (Ser); by autocatalysis.

The protein belongs to the phosphatidylserine decarboxylase family. PSD-A subfamily. Heterodimer of a large membrane-associated beta subunit and a small pyruvoyl-containing alpha subunit. Pyruvate is required as a cofactor. Is synthesized initially as an inactive proenzyme. Formation of the active enzyme involves a self-maturation process in which the active site pyruvoyl group is generated from an internal serine residue via an autocatalytic post-translational modification. Two non-identical subunits are generated from the proenzyme in this reaction, and the pyruvate is formed at the N-terminus of the alpha chain, which is derived from the carboxyl end of the proenzyme. The post-translation cleavage follows an unusual pathway, termed non-hydrolytic serinolysis, in which the side chain hydroxyl group of the serine supplies its oxygen atom to form the C-terminus of the beta chain, while the remainder of the serine residue undergoes an oxidative deamination to produce ammonia and the pyruvoyl prosthetic group on the alpha chain.

It is found in the cell membrane. It carries out the reaction a 1,2-diacyl-sn-glycero-3-phospho-L-serine + H(+) = a 1,2-diacyl-sn-glycero-3-phosphoethanolamine + CO2. Its pathway is phospholipid metabolism; phosphatidylethanolamine biosynthesis; phosphatidylethanolamine from CDP-diacylglycerol: step 2/2. Its function is as follows. Catalyzes the formation of phosphatidylethanolamine (PtdEtn) from phosphatidylserine (PtdSer). The chain is Phosphatidylserine decarboxylase proenzyme from Geotalea uraniireducens (strain Rf4) (Geobacter uraniireducens).